We begin with the raw amino-acid sequence, 115 residues long: uncharacterized protein (115 aa).

The N-terminal stretch at 1–26 is a signal peptide; that stretch reads MNFKKTVVSALSISALALSVSGVASA. A BIG2 domain is found at 36-114; that stretch reads VKNISISPTH…AVFGKVYVTV (79 aa).

This is an uncharacterized protein from Bacillus subtilis (strain 168).